The primary structure comprises 704 residues: Acetate--CoA ligase [ADP-forming] (704 aa).

In the N-terminal section; belongs to the acetate CoA ligase alpha subunit family. This sequence in the C-terminal section; belongs to the acetate CoA ligase beta subunit family. As to quaternary structure, homodimer.

The enzyme catalyses acetate + ATP + CoA = acetyl-CoA + ADP + phosphate. Functionally, catalyzes the formation of acetate and ATP from acetyl-CoA by using ADP and phosphate. Can also use butyryl-CoA, but not phenylacetyl-CoA. Cannot catalyze the reverse reaction. The protein is Acetate--CoA ligase [ADP-forming] of Methanocaldococcus jannaschii (strain ATCC 43067 / DSM 2661 / JAL-1 / JCM 10045 / NBRC 100440) (Methanococcus jannaschii).